Here is a 322-residue protein sequence, read N- to C-terminus: MVSVINTVDTSHEDMIHDAQMDYYGTRLATCSSDRSVKIFDVRNGGQILIADLRGHEGPVWQVAWAHPMYGNILASCSYDRKVIIWREENGTWEKSHEHAGHDSSVNSVCWAPHDYGLILACGSSDGAISLLTYTGEGQWEVKKINNAHTIGCNAVSWAPAVVPGSLIDHPSGQKPNYIKRFASGGCDNLIKLWKEEEDGQWKEEQKLEAHSDWVRDVAWAPSIGLPTSTIASCSQDGRVFIWTCDDASSNTWSPKLLHKFNDVVWHVSWSITANILAVSGGDNKVTLWKESVDGQWVCISDVNKGQGSVSASVTEGQQNEQ.

V2 is subject to N-acetylvaline. WD repeat units lie at residues 11–50 (SHED…QILI), 55–96 (GHEG…WEKS), 101–144 (GHDS…EVKK), 148–204 (AHTI…QWKE), 210–253 (AHSD…SNTW), and 260–299 (KFND…QWVC). At S184 the chain carries Phosphoserine. S309 carries the post-translational modification Phosphoserine.

This sequence belongs to the WD repeat SEC13 family. At the nuclear pore: component of the Y-shaped Nup107-160 subcomplex of the nuclear pore complex (NPC). The Nup107-160 subcomplex includes NUP160, NUP133, NUP107, NUP98, NUP85, NUP43, NUP37, SEH1 and SEC13. At the COPII coat complex: interacts with SEC31A and SEC31B. Interacts with SEC16A. Interacts with SEC16B. Component of the GATOR2 subcomplex, composed of MIOS, SEC13, SEH1L, WDR24 and WDR59. The GATOR2 complex interacts with CASTOR1 and CASTOR2; the interaction is negatively regulated by arginine. The GATOR2 complex interacts with SESN1, SESN2 and SESN3; the interaction is negatively regulated by amino acids.

Its subcellular location is the cytoplasmic vesicle. It localises to the COPII-coated vesicle membrane. The protein resides in the endoplasmic reticulum membrane. It is found in the nucleus. The protein localises to the nuclear pore complex. Its subcellular location is the lysosome membrane. The GATOR2 complex is negatively regulated by the upstream amino acid sensors CASTOR1 and SESN2, which sequester the GATOR2 complex in absence of amino acids. In the presence of abundant amino acids, GATOR2 is released from CASTOR1 and SESN2 and activated. In terms of biological role, functions as a component of the nuclear pore complex (NPC) and the COPII coat. At the endoplasmic reticulum, SEC13 is involved in the biogenesis of COPII-coated vesicles. Required for the exit of adipsin (CFD/ADN), an adipocyte-secreted protein from the endoplasmic reticulum. As a component of the GATOR2 complex, functions as an activator of the amino acid-sensing branch of the mTORC1 signaling pathway. The GATOR2 complex indirectly activates mTORC1 through the inhibition of the GATOR1 subcomplex. GATOR2 probably acts as an E3 ubiquitin-protein ligase toward GATOR1. In the presence of abundant amino acids, the GATOR2 complex mediates ubiquitination of the NPRL2 core component of the GATOR1 complex, leading to GATOR1 inactivation. In the absence of amino acids, GATOR2 is inhibited, activating the GATOR1 complex. Within the GATOR2 complex, SEC13 and SEH1L are required to stabilize the complex. In Homo sapiens (Human), this protein is Protein SEC13 homolog.